The chain runs to 732 residues: ATP-dependent RNA helicase DBP7 (732 aa).

The segment at 1 to 91 (MIEDDGMLLN…QSNNESVKDV (91 aa)) is disordered. Basic and acidic residues-rich tracts occupy residues 42–56 (MMME…KTFE) and 64–75 (DTNKKPKSDSSG). A compositionally biased stretch (polar residues) spans 76 to 86 (RKSYNQQSNNE). The Q motif signature appears at 144–173 (DNFDSLKIEQQLVNHLNEKMRIQKPTSIQK). The region spanning 178-372 (QLLSSKNNDL…NVALQNYKMI (195 aa)) is the Helicase ATP-binding domain. 191–198 (AQTGSGKT) contributes to the ATP binding site. The short motif at 307–310 (DEAD) is the DEAD box element. A Helicase C-terminal domain is found at 420–599 (QKKKKLDYVS…KLVNYTNDLL (180 aa)). The interval 692–711 (MGLQNTKNGGEAKKNSKESA) is disordered. The span at 701 to 711 (GEAKKNSKESA) shows a compositional bias: basic and acidic residues.

This sequence belongs to the DEAD box helicase family. DDX31/DBP7 subfamily.

It localises to the nucleus. The protein localises to the nucleolus. The enzyme catalyses ATP + H2O = ADP + phosphate + H(+). ATP-binding RNA helicase involved in the biogenesis of 60S ribosomal subunits and is required for the normal formation of 25S and 5.8S rRNAs. This Vanderwaltozyma polyspora (strain ATCC 22028 / DSM 70294 / BCRC 21397 / CBS 2163 / NBRC 10782 / NRRL Y-8283 / UCD 57-17) (Kluyveromyces polysporus) protein is ATP-dependent RNA helicase DBP7 (DBP7).